The chain runs to 784 residues: Homeobox-leucine zipper protein ROC2 (784 aa).

The tract at residues 60-113 (AESGDNMIRSRASDPLGGDEFESKSGSENVDGVSVDDQDPNQRPRKKRYHRHTQ) is disordered. Over residues 102–113 (RPRKKRYHRHTQ) the composition is skewed to basic residues. Positions 104 to 163 (RKKRYHRHTQHQIQEMEAFFKECPHPDDKQRKELSRELGLEPLQVKFWFQNKRTQMKNQH) form a DNA-binding region, homeobox. Residues 158-234 (QMKNQHERHE…DRISAIAAKY (77 aa)) adopt a coiled-coil conformation. The region spanning 286 to 523 (SEVDKPMIVE…LDRQCERLAS (238 aa)) is the START domain.

It belongs to the HD-ZIP homeobox family. Class IV subfamily.

The protein resides in the nucleus. Functionally, probable transcription factor. The protein is Homeobox-leucine zipper protein ROC2 (ROC2) of Oryza sativa subsp. japonica (Rice).